We begin with the raw amino-acid sequence, 603 residues long: Glutamyl-tRNA(Gln) amidotransferase subunit B, mitochondrial (603 aa).

Disordered regions lie at residues 38–61 and 72–91; these read RGRD…SNGA and EQAR…PPEH. The segment covering 42–58 has biased composition (polar residues); the sequence is WSSTSRRAIDTQTSGAS.

It belongs to the GatB/GatE family. GatB subfamily. Subunit of the heterotrimeric GatCAB amidotransferase (AdT) complex, composed of A, B and C subunits.

The protein resides in the mitochondrion. The enzyme catalyses L-glutamyl-tRNA(Gln) + L-glutamine + ATP + H2O = L-glutaminyl-tRNA(Gln) + L-glutamate + ADP + phosphate + H(+). Allows the formation of correctly charged Gln-tRNA(Gln) through the transamidation of misacylated Glu-tRNA(Gln) in the mitochondria. The reaction takes place in the presence of glutamine and ATP through an activated gamma-phospho-Glu-tRNA(Gln). The protein is Glutamyl-tRNA(Gln) amidotransferase subunit B, mitochondrial of Paracoccidioides brasiliensis (strain Pb18).